The chain runs to 388 residues: Chorismate synthase (388 aa).

The NADP(+) site is built by Arg39 and Arg45. Residues 130–132 (RSS), 251–252 (NA), Gly296, 311–315 (KPIPT), and Arg337 each bind FMN.

It belongs to the chorismate synthase family. As to quaternary structure, homotetramer. It depends on FMNH2 as a cofactor.

It carries out the reaction 5-O-(1-carboxyvinyl)-3-phosphoshikimate = chorismate + phosphate. Its pathway is metabolic intermediate biosynthesis; chorismate biosynthesis; chorismate from D-erythrose 4-phosphate and phosphoenolpyruvate: step 7/7. In terms of biological role, catalyzes the anti-1,4-elimination of the C-3 phosphate and the C-6 proR hydrogen from 5-enolpyruvylshikimate-3-phosphate (EPSP) to yield chorismate, which is the branch point compound that serves as the starting substrate for the three terminal pathways of aromatic amino acid biosynthesis. This reaction introduces a second double bond into the aromatic ring system. In Streptococcus pyogenes serotype M1, this protein is Chorismate synthase.